A 459-amino-acid polypeptide reads, in one-letter code: Ribulose bisphosphate carboxylase large chain (459 aa).

Lysine 4 bears the N6,N6,N6-trimethyllysine mark. Positions 113 and 163 each coordinate substrate. The active-site Proton acceptor is the lysine 165. Lysine 167 is a substrate binding site. Lysine 191, aspartate 193, and glutamate 194 together coordinate Mg(2+). Position 191 is an N6-carboxylysine (lysine 191). Histidine 284 serves as the catalytic Proton acceptor. Substrate is bound by residues arginine 285, histidine 317, and serine 369.

It belongs to the RuBisCO large chain family. Type I subfamily. As to quaternary structure, heterohexadecamer of 8 large chains and 8 small chains; disulfide-linked. The disulfide link is formed within the large subunit homodimers. Mg(2+) serves as cofactor. The disulfide bond which can form in the large chain dimeric partners within the hexadecamer appears to be associated with oxidative stress and protein turnover.

The protein localises to the plastid. It localises to the chloroplast. It carries out the reaction 2 (2R)-3-phosphoglycerate + 2 H(+) = D-ribulose 1,5-bisphosphate + CO2 + H2O. The catalysed reaction is D-ribulose 1,5-bisphosphate + O2 = 2-phosphoglycolate + (2R)-3-phosphoglycerate + 2 H(+). Its function is as follows. RuBisCO catalyzes two reactions: the carboxylation of D-ribulose 1,5-bisphosphate, the primary event in carbon dioxide fixation, as well as the oxidative fragmentation of the pentose substrate in the photorespiration process. Both reactions occur simultaneously and in competition at the same active site. This chain is Ribulose bisphosphate carboxylase large chain, found in Morus alba (White mulberry).